A 296-amino-acid polypeptide reads, in one-letter code: tRNA pseudouridine synthase B (296 aa).

Catalysis depends on Asp38, which acts as the Nucleophile.

It belongs to the pseudouridine synthase TruB family. Type 1 subfamily.

It catalyses the reaction uridine(55) in tRNA = pseudouridine(55) in tRNA. Its function is as follows. Responsible for synthesis of pseudouridine from uracil-55 in the psi GC loop of transfer RNAs. This is tRNA pseudouridine synthase B from Ehrlichia chaffeensis (strain ATCC CRL-10679 / Arkansas).